The sequence spans 417 residues: Tyrosine--tRNA ligase (417 aa).

Y39 is a binding site for L-tyrosine. The short motif at 44–53 is the 'HIGH' region element; the sequence is ATATSLHIGN. L-tyrosine is bound by residues Y176 and Q180. The 'KMSKS' region signature appears at 236-240; the sequence is KMGKS. An ATP-binding site is contributed by K239. In terms of domain architecture, S4 RNA-binding spans 350 to 416; it reads IGILSLLVTA…GKKKHVLVRP (67 aa).

Belongs to the class-I aminoacyl-tRNA synthetase family. TyrS type 1 subfamily. In terms of assembly, homodimer.

It localises to the cytoplasm. The catalysed reaction is tRNA(Tyr) + L-tyrosine + ATP = L-tyrosyl-tRNA(Tyr) + AMP + diphosphate + H(+). Catalyzes the attachment of tyrosine to tRNA(Tyr) in a two-step reaction: tyrosine is first activated by ATP to form Tyr-AMP and then transferred to the acceptor end of tRNA(Tyr). In Mesorhizobium japonicum (strain LMG 29417 / CECT 9101 / MAFF 303099) (Mesorhizobium loti (strain MAFF 303099)), this protein is Tyrosine--tRNA ligase.